We begin with the raw amino-acid sequence, 3704 residues long: Fatty acid synthase 2 (3704 aa).

Residues 27–41 (AVSAHGSPPSSASPG) show a composition bias toward low complexity. The disordered stretch occupies residues 27 to 52 (AVSAHGSPPSSASPGPDDKAFSVDGT). An acetyltransferase (AT) domain region spans residues 216–475 (ALFGGQGNNH…QARIPFSKRK (260 aa)). The tract at residues 639–887 (SRLLGKPPIM…LIASTQGCSD (249 aa)) is enoyl reductase (ER) domain. A dehydratase (DH) domain region spans residues 1216 to 1709 (GEQPSWIRAL…VPGDQLSVQL (494 aa)). A MaoC-like domain is found at 1624–1730 (PKTNEPYSRA…VQIDASNQRG (107 aa)). The interval 1747–2112 (YVFTGQGSQA…IEHVSEVTRS (366 aa)) is malonyl/palmitoyl transferase (MT/PT) domain. One can recognise a Carrier domain in the interval 2265 to 2343 (DERLDPLLTV…AALRPGYSGE (79 aa)). Ser2303 carries the O-(pantetheine 4'-phosphoryl)serine modification. The segment at 2733 to 2969 (GLDVLLTGVG…LGLVEPEFAS (237 aa)) is ketoreductase (KR) domain. The 448-residue stretch at 3176–3623 (QQEIELTHDL…QVGGIAMILH (448 aa)) folds into the Ketosynthase family 3 (KS3) domain. Catalysis depends on for beta-ketoacyl synthase activity residues Cys3359, His3506, and His3547.

In the N-terminal section; belongs to the fungal fatty acid synthetase subunit beta family. It in the C-terminal section; belongs to the thiolase-like superfamily. Fungal fatty acid synthetase subunit alpha family.

It participates in secondary metabolite biosynthesis. In terms of biological role, fatty acid synthase; part of the gene cluster that mediates the biosynthesis of the glycolipid biosurfactant ustilagic acid (UA). UA is a secreted cellobiose glycolipid that is toxic for many microorganisms and confers biocontrol activity to U.maydis. UA consists of 15,16-dihydroxypalmitic or 2,15,16-trihydroxypalmitic acid, which is O-glycosidically linked to cellobiose at its terminal hydroxyl group. In addition, the cellobiose moiety is acetylated and acylated with a short-chain hydroxy fatty acid. UA biosynthesis starts with omega-hydroxylation of palmitic acid catalyzed by the cytochrome P450 monooxygenase cyp1. Terminal hydroxylation of palmitic acid precedes subterminal hydroxylation catalyzed by the cytochrome P450 monooxygenase cyp2. Sequential glucosylation of the hydroxy fatty acid is probably catalyzed by the glycosyltransferase ugt1. The cellobiose lipid is further decorated by acetylation of the proximal glucose residue and by acylation with a short-chain beta-hydroxy fatty acid at the distal glucose residue. The acyltransferase uat1 may be a good candidate for catalyzing either acetylation or acylation of the cellobiose lipid. The fatty acid synthase fas2 may be involved in synthesis of the carbon backbone of the short-chain beta-hydroxy fatty acid esterified to the cellobiose disaccharide. The secreted UA consists of a mixture of both alpha-hydroxylated and non-hydroxylated glycolipids; therefore, alpha-hydroxylation of the long-chain fatty, catalyzed by the fatty acid hydroxylase ahd1, occurs late in UA biosynthesis and may be the last step before secretion. The protein is Fatty acid synthase 2 of Mycosarcoma maydis (Corn smut fungus).